A 770-amino-acid chain; its full sequence is MKMTVDFEECLKDSPRFRAALEEVEGDVAELELKLDKLVKLCIAMIDTGKAFCAANKQFMNGIRDLAQYSSNDAVVETSLTKFSDSLQEMINFHTILFDQTQRSIKAQLQNFVKEDLRKFKDAKKQFEKVSEEKENALVKNAQVQRNKQHEVEEAANILTATRKCFRHIALDYVLQINVLQSKRRSEILKSMLSFMYAHLAFFHQGYDLFSELGPYMKDLGAQLDRLVVDAAKEKREMEQKHSTIQQKDFSSDDSKLEYNVDAANGIVMEGYLFKRASNAFKTWNRRWFSIQNNQLVYQKKFKDSPTVVVEDLRLCTVKHCEDIERRFCFEVVSPTKSCMLQADSEKLRQAWIKAVQTSIATAYREKGDESEKLDKKSSPSTGSLDSGSESKEKLLKGESALQRVQCIPGNTSCCDCGLADPRWASINLGITLCIECSGIHRSLGVHFSKVRSLTLDTWEPELLKLMCELGNDVINRVYEAKLEKMGVKKPQPGQRQEKEAYIRAKYVERKFVDKYSTLLSPSEQEKRIISKSCEDQRLSHTRVSVHTPVKSNDSGIQQCSDDGRESLPSTVSANSLYEPEGERQESSVFLDSKHLNPGLQLYRASYEKNLPKMAEALAHGADVNWANSDENQATPLIQAVLGGSLVTCEFLLQNGANVNQRDVQGRGPLHHATVLGHTGQVCLFLKRGANQHATDEEGKDPLSIAVEAANADIVTLLRLARMNEEMRESEGLYGQPGDETYQDIFRDFSQMASNNPEKLNRFQQDSQKF.

The region spanning 6 to 226 (DFEECLKDSP…MKDLGAQLDR (221 aa)) is the BAR domain. A PH domain is found at 266–361 (GIVMEGYLFK…WIKAVQTSIA (96 aa)). The interval 371–392 (SEKLDKKSSPSTGSLDSGSESK) is disordered. Residues 379 to 388 (SPSTGSLDSG) are compositionally biased toward low complexity. A phosphoserine mark is found at Ser384 and Ser387. One can recognise an Arf-GAP domain in the interval 399–520 (ESALQRVQCI…KFVDKYSTLL (122 aa)). The C4-type zinc finger occupies 414–437 (CCDCGLADPRWASINLGITLCIEC). Residue Ser521 is modified to Phosphoserine. Polar residues predominate over residues 548–561 (TPVKSNDSGIQQCS). A disordered region spans residues 548 to 571 (TPVKSNDSGIQQCSDDGRESLPST). A phosphoserine mark is found at Ser573 and Ser576. ANK repeat units follow at residues 632 to 661 (NQAT…NVNQ), 665 to 694 (QGRG…NQHA), and 698 to 727 (EGKD…NEEM). Residue Tyr734 is modified to Phosphotyrosine. Ser767 carries the phosphoserine modification.

As to quaternary structure, interacts with RAB35 (GTP-bound form); the interaction is direct and probably recruits ACAP2 to membranes. Interacts with MICALL1; the interaction is indirect through RAB35.

The protein localises to the endosome membrane. It is found in the cell membrane. GAP activity stimulated by phosphatidylinositol 4,5-bisphosphate (PIP2) and phosphatidic acid. Its function is as follows. GTPase-activating protein (GAP) for ADP ribosylation factor 6 (ARF6). Doesn't show GAP activity for RAB35. The polypeptide is Arf-GAP with coiled-coil, ANK repeat and PH domain-containing protein 2 (Acap2) (Rattus norvegicus (Rat)).